Reading from the N-terminus, the 368-residue chain is UV excision repair protein rhp23 (368 aa).

The Ubiquitin-like domain maps to 1–77 (MNLTFKNLQQ…IVCMVSRPKT (77 aa)). 2 stretches are compositionally biased toward low complexity: residues 76 to 88 (KTSTSTPKSAASP) and 103 to 124 (APSSTVAESTSTTQTVAAAAPS). The tract at residues 76–134 (KTSTSTPKSAASPAPNPPASVPEKKVEAPSSTVAESTSTTQTVAAAAPSNPDTTATSEA) is disordered. Residues Ser-84 and Ser-87 each carry the phosphoserine modification. UBA domains lie at 135–185 (PIDA…LLTG) and 320–360 (QEES…LFEH). Ser-364 is modified (phosphoserine).

The protein resides in the nucleus. Functionally, involved in postreplication repair of UV-damaged DNA. Postreplication repair functions in gap-filling of a daughter strand on replication of damaged DNA. In terms of biological role, protects ubiquitin chains against dissambly by deubiquitinating enzymes thereby promoting protein degradation. In Schizosaccharomyces pombe (strain 972 / ATCC 24843) (Fission yeast), this protein is UV excision repair protein rhp23 (rhp23).